Consider the following 303-residue polypeptide: MSEVEKTYCGFIAIVGRPNVGKSTLLNELLGQKISITSRKPQTTRHRIMGIHTEGPYQAIYVDTPGLHIEEKRAINRLMNRAASSSLGDVELVIFVVEGTHWTADDEMVVNKLRSLQCPVLLAINKVDNVTDKTKLLPHMQFLSQQMNFLDVVPISAEKGMNVDTIASIVRKHMPEAEHHFPEDYITDRSQRFMASEIIREKLMRFLGEELPYSVTVEIEQFVPNERGGYNIHGLILVEREGQKKMVIGNKGSKIKVIGTEARQDMERMFEAKVHLELWVKVKSGWADDERALRSLGYTDDLK.

Residues 8–176 form the Era-type G domain; it reads YCGFIAIVGR…ASIVRKHMPE (169 aa). The interval 16–23 is G1; the sequence is GRPNVGKS. GTP is bound at residue 16-23; it reads GRPNVGKS. Positions 42–46 are G2; that stretch reads QTTRH. Positions 63 to 66 are G3; it reads DTPG. GTP-binding positions include 63 to 67 and 125 to 128; these read DTPGL and NKVD. Positions 125-128 are G4; it reads NKVD. The segment at 155-157 is G5; the sequence is ISA. Residues 207-284 form the KH type-2 domain; it reads LGEELPYSVT…HLELWVKVKS (78 aa).

This sequence belongs to the TRAFAC class TrmE-Era-EngA-EngB-Septin-like GTPase superfamily. Era GTPase family. Monomer.

The protein resides in the cytoplasm. It is found in the cell inner membrane. Its function is as follows. An essential GTPase that binds both GDP and GTP, with rapid nucleotide exchange. Plays a role in 16S rRNA processing and 30S ribosomal subunit biogenesis and possibly also in cell cycle regulation and energy metabolism. The sequence is that of GTPase Era from Yersinia pseudotuberculosis serotype O:1b (strain IP 31758).